Here is a 422-residue protein sequence, read N- to C-terminus: Phagosome assembly factor 1 (422 aa).

It belongs to the PHAF1 family. Interacts with BCAS3; the interaction is requrired for the association with the phagophore.

It localises to the cytoplasm. It is found in the preautophagosomal structure. Its function is as follows. Plays a regulatory role in autophagic activity. In complex with BCAS3, associates with the autophagosome formation site during both non-selective and selective autophagy. The sequence is that of Phagosome assembly factor 1 from Homo sapiens (Human).